Consider the following 442-residue polypeptide: MKERNTELVQGFRHSVPYINAHRGKTFVIMLGGEAIKYGNFYSIINDIGLLHSLGIRLVVVYGACPQINTSLKEKNIKIIYHKSIRITDLASLEQVKQAAGKLQLDITARLSMSLTNTPLQGANISVVSGNFIISQPLGVDDGVDYCHSGRVRRIDKNAINCQLNNGAIVLIGPVAVSVTGESFNLTSEEIATQVSIELKAEKMIGFCGNQGVINDEGKIISELLSNDIKNIIKKLEKKGDYISSTVRFLKGSIKACKSGVNRSHLISYHKSGALLQELFSRDGIGTQMVMESAEKIRGASINDIGGILELIRPLEHKGILVRRSREQLEIEVDKFTIIEHDNLTIACAALYPFFKEKIGEMACLAVHPDYRNSSRGDALLKKIKMNAKDMHLKRIFVLTTQSIHWFQERGFILVDIEVLPESKKKMYNYQRGSKILMIDVI.

Residues 295-442 enclose the N-acetyltransferase domain; sequence EKIRGASIND…GSKILMIDVI (148 aa).

The protein belongs to the acetyltransferase family. ArgA subfamily. In terms of assembly, homohexamer.

The protein resides in the cytoplasm. The enzyme catalyses L-glutamate + acetyl-CoA = N-acetyl-L-glutamate + CoA + H(+). Its pathway is amino-acid biosynthesis; L-arginine biosynthesis; N(2)-acetyl-L-ornithine from L-glutamate: step 1/4. The polypeptide is Amino-acid acetyltransferase (argA) (Buchnera aphidicola subsp. Acyrthosiphon pisum (strain APS) (Acyrthosiphon pisum symbiotic bacterium)).